Consider the following 596-residue polypeptide: Succinate dehydrogenase flavoprotein subunit (596 aa).

Residues Gly18–Gly23, Thr41–Gly56, and Asp225 contribute to the FAD site. Position 49 is a tele-8alpha-FAD histidine (His49). Positions 246 and 258 each coordinate substrate. Catalysis depends on Arg290, which acts as the Proton acceptor. His357 contacts substrate. Glu391 serves as a coordination point for FAD. Arg402 is a binding site for substrate. Ser407–Leu408 provides a ligand contact to FAD.

Belongs to the FAD-dependent oxidoreductase 2 family. FRD/SDH subfamily. In terms of assembly, part of an enzyme complex containing four subunits: a flavoprotein, an iron-sulfur, cytochrome b-556, and a hydrophobic anchor protein. FAD serves as cofactor.

It is found in the cell inner membrane. The catalysed reaction is a quinone + succinate = fumarate + a quinol. It functions in the pathway carbohydrate metabolism; tricarboxylic acid cycle; fumarate from succinate (bacterial route): step 1/1. This chain is Succinate dehydrogenase flavoprotein subunit (sdhA), found in Rickettsia felis (strain ATCC VR-1525 / URRWXCal2) (Rickettsia azadi).